Reading from the N-terminus, the 185-residue chain is Elongation factor P 1 (185 aa).

The protein belongs to the elongation factor P family.

The protein resides in the cytoplasm. Its pathway is protein biosynthesis; polypeptide chain elongation. Its function is as follows. Involved in peptide bond synthesis. Stimulates efficient translation and peptide-bond synthesis on native or reconstituted 70S ribosomes in vitro. Probably functions indirectly by altering the affinity of the ribosome for aminoacyl-tRNA, thus increasing their reactivity as acceptors for peptidyl transferase. This Chlamydia muridarum (strain MoPn / Nigg) protein is Elongation factor P 1 (efp1).